A 382-amino-acid chain; its full sequence is Dual-specificity RNA methyltransferase RlmN (382 aa).

Glutamate 91 (proton acceptor) is an active-site residue. The 243-residue stretch at 97-339 (EEDRGTLCIS…TTIRKTRGDD (243 aa)) folds into the Radical SAM core domain. Cysteines 104 and 344 form a disulfide. [4Fe-4S] cluster is bound by residues cysteine 111, cysteine 115, and cysteine 118. S-adenosyl-L-methionine contacts are provided by residues 165 to 166 (GE), serine 197, 219 to 221 (SLH), and asparagine 301. Cysteine 344 functions as the S-methylcysteine intermediate in the catalytic mechanism.

Belongs to the radical SAM superfamily. RlmN family. It depends on [4Fe-4S] cluster as a cofactor.

Its subcellular location is the cytoplasm. It carries out the reaction adenosine(2503) in 23S rRNA + 2 reduced [2Fe-2S]-[ferredoxin] + 2 S-adenosyl-L-methionine = 2-methyladenosine(2503) in 23S rRNA + 5'-deoxyadenosine + L-methionine + 2 oxidized [2Fe-2S]-[ferredoxin] + S-adenosyl-L-homocysteine. The catalysed reaction is adenosine(37) in tRNA + 2 reduced [2Fe-2S]-[ferredoxin] + 2 S-adenosyl-L-methionine = 2-methyladenosine(37) in tRNA + 5'-deoxyadenosine + L-methionine + 2 oxidized [2Fe-2S]-[ferredoxin] + S-adenosyl-L-homocysteine. Its function is as follows. Specifically methylates position 2 of adenine 2503 in 23S rRNA and position 2 of adenine 37 in tRNAs. m2A2503 modification seems to play a crucial role in the proofreading step occurring at the peptidyl transferase center and thus would serve to optimize ribosomal fidelity. This chain is Dual-specificity RNA methyltransferase RlmN, found in Albidiferax ferrireducens (strain ATCC BAA-621 / DSM 15236 / T118) (Rhodoferax ferrireducens).